Consider the following 427-residue polypeptide: Inward rectifier potassium channel 2 (427 aa).

The Cytoplasmic portion of the chain corresponds to 1 to 81 (MGSVRTNRYS…IFTTCVDIRW (81 aa)). Position 76 is an S-nitrosocysteine (cysteine 76). The chain crosses the membrane as a helical span at residues 82–106 (RWMLVIFCLAFVLSWLFFGCVFWLI). Residues 107-128 (ALLHGDLDASKESKACVSEVNS) are Extracellular-facing. Residues 129–140 (FTAAFLFSIETQ) constitute an intramembrane region (helical; Pore-forming). Positions 141–147 (TTIGYGF) form an intramembrane region, pore-forming. The Selectivity filter signature appears at 142-147 (TIGYGF). Over 148–156 (RCVTDECPI) the chain is Extracellular. The helical transmembrane segment at 157 to 178 (AVFMVVFQSIVGCIIDAFIIGA) threads the bilayer. Over 179–427 (VMAKMAKPKK…PRPLRRESEI (249 aa)) the chain is Cytoplasmic. The segment at 181-208 (AKMAKPKKRNETLVFSHNAVIAMRDGKL) is polyphosphoinositide (PIP2)-binding. The interval 384-427 (SKEEDDSENGVPESTSTDTPPDIDLHNQASVPLEPRPLRRESEI) is disordered. Positions 425–427 (SEI) match the PDZ-binding motif.

It belongs to the inward rectifier-type potassium channel (TC 1.A.2.1) family. KCNJ2 subfamily. As to quaternary structure, homotetramer. Homomultimeric and heteromultimeric association with KCNJ4/Kir2.3. Can form heteromeric channels with Kir2.6/KCNJ18. Associates, via its PDZ-recognition domain, with a complex containing LIN7A, LIN7B, LIN7C, DLG1, CASK and APBA1. S-nitrosylation increases the open probability and inward rectifying currents.

Its subcellular location is the cell membrane. It localises to the sarcolemma. The protein resides in the T-tubule. It catalyses the reaction K(+)(in) = K(+)(out). Its activity is regulated as follows. Activated by phosphatidylinositol 4,5 biphosphate (PtdIns(4,5)P2). Inward rectifier potassium channels are characterized by a greater tendency to allow potassium to flow into the cell rather than out of it. Their voltage dependence is regulated by the concentration of extracellular potassium; as external potassium is raised, the voltage range of the channel opening shifts to more positive voltages. The inward rectification is mainly due to the blockage of outward current by internal magnesium. Can be blocked by extracellular barium and cesium. Probably participates in establishing action potential waveform and excitability of neuronal and muscle tissues. In Sus scrofa (Pig), this protein is Inward rectifier potassium channel 2 (KCNJ2).